We begin with the raw amino-acid sequence, 504 residues long: ATP synthase subunit alpha (504 aa).

169-176 is an ATP binding site; the sequence is GDRQTGKT.

Belongs to the ATPase alpha/beta chains family. F-type ATPases have 2 components, CF(1) - the catalytic core - and CF(0) - the membrane proton channel. CF(1) has five subunits: alpha(3), beta(3), gamma(1), delta(1), epsilon(1). CF(0) has three main subunits: a(1), b(2) and c(9-12). The alpha and beta chains form an alternating ring which encloses part of the gamma chain. CF(1) is attached to CF(0) by a central stalk formed by the gamma and epsilon chains, while a peripheral stalk is formed by the delta and b chains.

It localises to the cell membrane. It catalyses the reaction ATP + H2O + 4 H(+)(in) = ADP + phosphate + 5 H(+)(out). In terms of biological role, produces ATP from ADP in the presence of a proton gradient across the membrane. The alpha chain is a regulatory subunit. In Clostridium kluyveri (strain ATCC 8527 / DSM 555 / NBRC 12016 / NCIMB 10680 / K1), this protein is ATP synthase subunit alpha.